Here is a 604-residue protein sequence, read N- to C-terminus: Microtubule-associated protein 70-4 (604 aa).

Residues 1–33 form a disordered region; that stretch reads MEERGFMSPSLAISASYREGGSKGMSRRRSMRP. Residues 49-351 adopt a coiled-coil conformation; the sequence is DPVRIELNRL…ADRAAKSEAQ (303 aa). Residues 233–470 are required for targeting to microtubules; it reads IIDKMHRQKV…PLNHKSSEGT (238 aa). Disordered stretches follow at residues 367–422 and 434–495; these read LKGP…RSLT and GTSR…NDSV. Residues 371–385 are compositionally biased toward low complexity; it reads TSSSSRGTSVGRSSS. 2 stretches are compositionally biased toward polar residues: residues 401–422 and 468–478; these read PKIT…RSLT and EGTSRGESPSS. A coiled-coil region spans residues 521–569; sequence LRDKDEAIEMLAKKVETLTKAMDVEAKKMRREVAVMGKEVAAMRVVDKG.

This sequence belongs to the MAP70 family.

It localises to the cytoplasm. Its subcellular location is the cytoskeleton. In terms of biological role, plant-specific protein that interact with microtubules. This Arabidopsis thaliana (Mouse-ear cress) protein is Microtubule-associated protein 70-4 (MAP70.4).